The following is a 92-amino-acid chain: YcgL domain-containing protein SO_2575 (92 aa).

The region spanning 1 to 85 (MLCAVYKSSR…PQVNLLAEHR (85 aa)) is the YcgL domain.

The sequence is that of YcgL domain-containing protein SO_2575 from Shewanella oneidensis (strain ATCC 700550 / JCM 31522 / CIP 106686 / LMG 19005 / NCIMB 14063 / MR-1).